Reading from the N-terminus, the 370-residue chain is Integrin-linked kinase-associated serine/threonine phosphatase 2C (370 aa).

The residue at position 1 (Met1) is an N-acetylmethionine. The segment at 1-69 (MDLFGDLPEP…SDEEKNGSEE (69 aa)) is disordered. Phosphoserine is present on Ser13. The span at 33–45 (SSGDSGSLDTSLS) shows a compositional bias: low complexity. Over residues 46-69 (EEVKNEGKGAKRKASDEEKNGSEE) the composition is skewed to basic and acidic residues. The region spanning 86–368 (KGYVAERKGE…DNVTVMVVRI (283 aa)) is the PPM-type phosphatase domain. Residues Asp130 and Gly131 each contribute to the Mn(2+) site. N6-acetyllysine is present on Lys188. Mn(2+)-binding residues include Asp304 and Asp359.

It belongs to the PP2C family. In terms of assembly, interacts with ILK. The cofactor is Mg(2+). Mn(2+) serves as cofactor.

It localises to the cytoplasm. The enzyme catalyses O-phospho-L-seryl-[protein] + H2O = L-seryl-[protein] + phosphate. The catalysed reaction is O-phospho-L-threonyl-[protein] + H2O = L-threonyl-[protein] + phosphate. Its function is as follows. Protein phosphatase that may play a role in regulation of cell cycle progression via dephosphorylation of its substrates whose appropriate phosphorylation states might be crucial for cell proliferation. Selectively associates with integrin linked kinase (ILK), to modulate cell adhesion and growth factor signaling. Inhibits the ILK-GSK3B signaling axis and may play an important role in inhibiting oncogenic transformation. The protein is Integrin-linked kinase-associated serine/threonine phosphatase 2C (ILKAP) of Bos taurus (Bovine).